Reading from the N-terminus, the 338-residue chain is High mobility group B protein 9 (338 aa).

Residues 38-129 (VKDSSVFWDT…LLFHYEQVHL (92 aa)) enclose the ARID domain. The segment at 233 to 259 (TGRRRRRLGKRRRSRRREDPNYPKPNR) is disordered. Positions 235–247 (RRRRRLGKRRRSR) are enriched in basic residues. The HMG box DNA-binding region spans 255-322 (PKPNRSGYNF…RYQRELNEYR (68 aa)).

Predominantly expressed in leaves, flowers and seedlings.

The protein resides in the nucleus. Its function is as follows. Binds preferentially DNA with A/T-rich content. Required for karyogamy during female gametophyte development, when the two polar nuclei fuse to form the diploid central cell nucleus. This Arabidopsis thaliana (Mouse-ear cress) protein is High mobility group B protein 9 (HMGB9).